We begin with the raw amino-acid sequence, 443 residues long: Signal recognition particle 54 kDa protein (443 aa).

GTP contacts are provided by residues 107–114, 189–193, and 247–250; these read GVQGSGKT, DTAGR, and TKLD.

The protein belongs to the GTP-binding SRP family. SRP54 subfamily. In terms of assembly, part of the signal recognition particle protein translocation system, which is composed of SRP and FtsY. Archaeal SRP consists of a 7S RNA molecule of 300 nucleotides and two protein subunits: SRP54 and SRP19.

Its subcellular location is the cytoplasm. The catalysed reaction is GTP + H2O = GDP + phosphate + H(+). In terms of biological role, involved in targeting and insertion of nascent membrane proteins into the cytoplasmic membrane. Binds to the hydrophobic signal sequence of the ribosome-nascent chain (RNC) as it emerges from the ribosomes. The SRP-RNC complex is then targeted to the cytoplasmic membrane where it interacts with the SRP receptor FtsY. The protein is Signal recognition particle 54 kDa protein of Pyrococcus abyssi (strain GE5 / Orsay).